Consider the following 83-residue polypeptide: Retinal cone rhodopsin-sensitive cGMP 3',5'-cyclic phosphodiesterase subunit gamma (83 aa).

The interval 1-51 is disordered; it reads MSDSPCLSPPAPSQGPTTPRKGPPKFKQRQTRQFKSKPPKKGVKGFGDDIP. Residues 22–43 show a composition bias toward basic residues; that stretch reads GPPKFKQRQTRQFKSKPPKKGV.

The protein belongs to the rod/cone cGMP-PDE gamma subunit family. As to quaternary structure, tetramer composed of two catalytic chains (alpha and beta), and two inhibitory chains (gamma).

The catalysed reaction is 3',5'-cyclic GMP + H2O = GMP + H(+). Participates in processes of transmission and amplification of the visual signal. cGMP-PDEs are the effector molecules in G-protein-mediated phototransduction in vertebrate rods and cones. The polypeptide is Retinal cone rhodopsin-sensitive cGMP 3',5'-cyclic phosphodiesterase subunit gamma (Pde6h) (Rattus norvegicus (Rat)).